Here is a 556-residue protein sequence, read N- to C-terminus: Valencene synthase (556 aa).

Residues 1–12 (MSTQVSASSLAQ) are compositionally biased toward polar residues. Positions 1 to 24 (MSTQVSASSLAQIPQPKNRPVANF) are disordered. Mg(2+) contacts are provided by Asp310, Asp314, and Glu462. Residues 310-314 (DDIHD) carry the DDXXD motif motif.

The protein belongs to the terpene synthase family. Tpsa subfamily. It depends on Mg(2+) as a cofactor. As to expression, expressed in flowers and anthers. Detected inside the pollen grains, but not in stems, leaves, tendrils, roots, seeds, pistils or caps.

Its subcellular location is the cytoplasm. It catalyses the reaction (2E,6E)-farnesyl diphosphate = (+)-valencene + diphosphate. It carries out the reaction (2E,6E)-farnesyl diphosphate = (-)-7-epi-alpha-selinene + diphosphate. The protein operates within secondary metabolite biosynthesis; terpenoid biosynthesis. Functionally, involved in the biosynthesis of valencene, a major volatile emitted from flowers of grapevine. Can use farnesyl diphosphate as substrate, but not geranyl diphosphate or geranylgeranyl diphosphate. Produces mainly (+)-valencene and (-)-7-epi-alpha-selinene along with five minor products. The chain is Valencene synthase (ValCS) from Vitis vinifera (Grape).